Here is a 257-residue protein sequence, read N- to C-terminus: MKSFGLIALAICGVICVAAEPQHTYDGRNGPHVFGSPGNQVYIRGQNEGTYSVPGVGGQFQNAPQRGEHVYTDEAGNTFVNRKNAGGPASHTISGPNFSAKNLGPNGAKSVGIPQRARRSPQFHVERPGRTVDVGNGGFYIQRGRRSPQLHVARPDRTVTIGNGGVYIQRSRRSPQFHVERPDRTVDFGNGGFSAQRFRRGINDARVQGENFVARDDQAGIWDNNVSVWKRPDGRTVTIDRNGHTIVSGRGRPAQHY.

Positions 1–19 (MKSFGLIALAICGVICVAA) are cleaved as a signal peptide. Residues 20–21 (EP) constitute a propeptide that is removed on maturation. Q22 bears the Pyrrolidone carboxylic acid mark. The segment at 95–122 (GPNFSAKNLGPNGAKSVGIPQRARRSPQ) is disordered. N97 carries N-linked (GlcNAc...) asparagine glycosylation. A propeptide spanning residues 118-121 (RRSP) is cleaved from the precursor. A Pyrrolidone carboxylic acid modification is found at Q122. A propeptide spanning residues 145-148 (RRSP) is cleaved from the precursor. Q149 carries the post-translational modification Pyrrolidone carboxylic acid. Residues 172 to 175 (RRSP) constitute a propeptide that is removed on maturation. At Q176 the chain carries Pyrrolidone carboxylic acid. Residues 199–204 (RRGIND) constitute a propeptide that is removed on maturation. A glycan (N-linked (GlcNAc...) asparagine) is linked at N225.

Post-translationally, proteolytically cleaved. Hemolymph (at protein level).

Its subcellular location is the secreted. Its function is as follows. Secreted immune-induced peptides induced by Toll signaling. Has a significant role in resistance to infection by the entomopathogenic fungus B.bassiana R444 and weak antifungal activity against M.rileyi PHP1705. In adult males, activity appears to be important for neuromuscular processes that mediate correct wing posture upon Toll activation. This is Baramicin A1 from Drosophila melanogaster (Fruit fly).